Reading from the N-terminus, the 1220-residue chain is Plasma membrane calcium-transporting ATPase 1 (1220 aa).

N-acetylglycine is present on glycine 2. The Cytoplasmic portion of the chain corresponds to 2–105 (GDMANNSVVY…KTFLQLVWEA (104 aa)). 2 positions are modified to phosphoserine: serine 8 and serine 17. The helical transmembrane segment at 106–126 (LQDVTLIILEIAAIVSLGLSF) threads the bilayer. Residues 127–154 (YQPPEGDNALCGEVSVGEEEGEGETGWI) are Extracellular-facing. Residues 155–175 (EGAAILLSVVCVVLVTAFNDW) form a helical membrane-spanning segment. Topologically, residues 176–366 (SKEKQFRGLQ…KEKSVLQGKL (191 aa)) are cytoplasmic. The tract at residues 297 to 356 (EEEKKDEKKKEKKNKKQDGAIENRNKAKAQDGEPMEMQPLKSEEGGDGDEKDKKKANLPK) is disordered. Basic and acidic residues-rich tracts occupy residues 312 to 327 (KQDG…KAQD) and 337 to 356 (KSEE…NLPK). A Phosphoserine modification is found at serine 338. A helical membrane pass occupies residues 367-386 (TKLAVQIGKAGLLMSAITVI). Residues 387-418 (ILVLYFLIDTFWVQKRPWLAECTPIYIQYFVK) are Extracellular-facing. A helical transmembrane segment spans residues 419-439 (FFIIGVTVLVVAVPEGLPLPV). The Cytoplasmic portion of the chain corresponds to 440-855 (TISLAYSVNE…RNVYDSISKF (416 aa)). Aspartate 475 functions as the 4-aspartylphosphate intermediate in the catalytic mechanism. 3 residues coordinate Mg(2+): aspartate 475, threonine 477, and aspartate 797. A helical membrane pass occupies residues 856–876 (LQFQLTVNVVAVIVAFTGACI). The Extracellular portion of the chain corresponds to 877 to 882 (TQDSPL). A helical transmembrane segment spans residues 883–903 (KAVQMLWVNLIMDTLASLALA). The Cytoplasmic segment spans residues 904–927 (TEPPTESLLLGKPYGRNKPLISRT). Residues 928–948 (MMKNILGHAFYQLVVVFTLLL) traverse the membrane as a helical segment. Residues 949–971 (AGEKFFDIDSGRNAPLHAPPSEH) lie on the Extracellular side of the membrane. The chain crosses the membrane as a helical span at residues 972 to 991 (YTIVFNIFVLMQLFNEINAR). Residues 992-1005 (KIHGERNVFEGIFN) lie on the Cytoplasmic side of the membrane. The chain crosses the membrane as a helical span at residues 1006–1027 (NAIFCTIVLGTFVVQIIIVQFA). The Extracellular portion of the chain corresponds to 1028-1039 (GKPFSCSELSVE). The helical transmembrane segment at 1040-1060 (QWLWSIFLGMGTLLWGQLIST) threads the bilayer. Residues 1061 to 1220 (IPTSRLKFQK…SPLHSLETSL (160 aa)) are Cytoplasmic-facing. A calmodulin-binding subdomain A region spans residues 1100–1117 (LRRWQILWFRGLNRIQTQ). At threonine 1116 the chain carries Phosphothreonine; by PKC. A required for basolateral membrane targeting region spans residues 1118–1220 (IRVVNAFRSS…SPLHSLETSL (103 aa)). Residues serine 1140 and serine 1155 each carry the phosphoserine modification. Residues 1160 to 1220 (PLIDDTDAED…SPLHSLETSL (61 aa)) form a disordered region. Threonine 1165 carries the phosphothreonine modification. Serine 1177 bears the Phosphoserine; by PKA mark. Phosphoserine is present on residues serine 1178 and serine 1182. The span at 1200-1220 (MNKSATSSSPGSPLHSLETSL) shows a compositional bias: polar residues.

It belongs to the cation transport ATPase (P-type) (TC 3.A.3) family. Type IIB subfamily. As to quaternary structure, monomer. Dimer. Oligomer. Calmodulin binding. Interacts with PDZD11. Interacts with SLC35G1 and STIM1. Interacts with YWHAE; interacts with the monomeric and dimeric forms of the YWHAE but prefer the monomer form; this interaction inhibits calcium-transporting ATPase activity. Interacts with NPTN; this interaction stabilizes ATP2B1 and increases ATPase activity; this interaction controls T cell calcium homeostasis following T cell activation. Interacts with EPB41; regulates small intestinal calcium absorption through regulation of membrane expression of ATP2B1. As to expression, isoform B is ubiquitously expressed and is the most predominant isoform. Isoform C is expressed at much lower levels in all tissues tested, but liver, while isoform A is found only in aorta, brain and stomach.

The protein localises to the cell membrane. It is found in the basolateral cell membrane. Its subcellular location is the synapse. It localises to the presynaptic cell membrane. The protein resides in the cytoplasmic vesicle. The protein localises to the secretory vesicle. It is found in the synaptic vesicle membrane. The enzyme catalyses Ca(2+)(in) + ATP + H2O = Ca(2+)(out) + ADP + phosphate + H(+). In terms of biological role, catalyzes the hydrolysis of ATP coupled with the transport of calcium from the cytoplasm to the extracellular space thereby maintaining intracellular calcium homeostasis. Plays a role in blood pressure regulation through regulation of intracellular calcium concentration and nitric oxide production leading to regulation of vascular smooth muscle cells vasoconstriction. Positively regulates bone mineralization through absorption of calcium from the intestine. Plays dual roles in osteoclast differentiation and survival by regulating RANKL-induced calcium oscillations in preosteoclasts and mediating calcium extrusion in mature osteoclasts. Regulates insulin sensitivity through calcium/calmodulin signaling pathway by regulating AKT1 activation and NOS3 activation in endothelial cells. May play a role in synaptic transmission by modulating calcium and proton dynamics at the synaptic vesicles. The protein is Plasma membrane calcium-transporting ATPase 1 of Oryctolagus cuniculus (Rabbit).